A 300-amino-acid polypeptide reads, in one-letter code: Ornithine carbamoyltransferase (300 aa).

Carbamoyl phosphate contacts are provided by residues Ser-51–Thr-54, Gln-78, Arg-102, and His-129–Gln-132. Residues Asn-160, Asp-217, and Ser-221–Met-222 each bind L-ornithine. Carbamoyl phosphate-binding positions include Cys-257 to Leu-258 and Arg-285.

It belongs to the aspartate/ornithine carbamoyltransferase superfamily. OTCase family.

Its subcellular location is the cytoplasm. It carries out the reaction carbamoyl phosphate + L-ornithine = L-citrulline + phosphate + H(+). It functions in the pathway amino-acid biosynthesis; L-arginine biosynthesis; L-arginine from L-ornithine and carbamoyl phosphate: step 1/3. Its function is as follows. Reversibly catalyzes the transfer of the carbamoyl group from carbamoyl phosphate (CP) to the N(epsilon) atom of ornithine (ORN) to produce L-citrulline. In Halorhodospira halophila (strain DSM 244 / SL1) (Ectothiorhodospira halophila (strain DSM 244 / SL1)), this protein is Ornithine carbamoyltransferase.